We begin with the raw amino-acid sequence, 696 residues long: DNA ligase (696 aa).

NAD(+) contacts are provided by residues 43-47 (DGEFD), 92-93 (SL), and E122. The active-site N6-AMP-lysine intermediate is the K124. NAD(+) contacts are provided by R145, E185, K301, and K325. Positions 419, 422, 438, and 444 each coordinate Zn(2+). Residues 608 to 696 (SIPRNLEGLS…GPDAVAESGV (89 aa)) enclose the BRCT domain.

The protein belongs to the NAD-dependent DNA ligase family. LigA subfamily. Mg(2+) is required as a cofactor. The cofactor is Mn(2+).

It catalyses the reaction NAD(+) + (deoxyribonucleotide)n-3'-hydroxyl + 5'-phospho-(deoxyribonucleotide)m = (deoxyribonucleotide)n+m + AMP + beta-nicotinamide D-nucleotide.. DNA ligase that catalyzes the formation of phosphodiester linkages between 5'-phosphoryl and 3'-hydroxyl groups in double-stranded DNA using NAD as a coenzyme and as the energy source for the reaction. It is essential for DNA replication and repair of damaged DNA. The polypeptide is DNA ligase (Rhodococcus jostii (strain RHA1)).